A 208-amino-acid chain; its full sequence is Pyridoxine/pyridoxamine 5'-phosphate oxidase (208 aa).

FMN is bound by residues 53 to 58 (RTVLLK), 68 to 69 (YS), Lys75, and Gln100. Lys58 is a binding site for substrate. 3 residues coordinate substrate: Tyr118, Arg122, and Ser126. Residues 135–136 (QS) and Trp180 each bind FMN. A substrate-binding site is contributed by 186 to 188 (RLH). Arg190 is a binding site for FMN.

The protein belongs to the pyridoxamine 5'-phosphate oxidase family. Homodimer. It depends on FMN as a cofactor.

The enzyme catalyses pyridoxamine 5'-phosphate + O2 + H2O = pyridoxal 5'-phosphate + H2O2 + NH4(+). It carries out the reaction pyridoxine 5'-phosphate + O2 = pyridoxal 5'-phosphate + H2O2. The protein operates within cofactor metabolism; pyridoxal 5'-phosphate salvage; pyridoxal 5'-phosphate from pyridoxamine 5'-phosphate: step 1/1. It participates in cofactor metabolism; pyridoxal 5'-phosphate salvage; pyridoxal 5'-phosphate from pyridoxine 5'-phosphate: step 1/1. Its function is as follows. Catalyzes the oxidation of either pyridoxine 5'-phosphate (PNP) or pyridoxamine 5'-phosphate (PMP) into pyridoxal 5'-phosphate (PLP). The sequence is that of Pyridoxine/pyridoxamine 5'-phosphate oxidase from Xylella fastidiosa (strain 9a5c).